Here is an 89-residue protein sequence, read N- to C-terminus: Small ribosomal subunit protein uS14 (89 aa).

4 residues coordinate Zn(2+): Cys52, Cys55, Cys68, and Cys71.

This sequence belongs to the universal ribosomal protein uS14 family. As to quaternary structure, part of the 30S ribosomal subunit. Contacts proteins S3 and S10. Requires Zn(2+) as cofactor.

In terms of biological role, binds 16S rRNA, required for the assembly of 30S particles and may also be responsible for determining the conformation of the 16S rRNA at the A site. This Salinibacter ruber (strain DSM 13855 / M31) protein is Small ribosomal subunit protein uS14 (rpsN).